We begin with the raw amino-acid sequence, 410 residues long: Ribose 1,5-bisphosphate phosphokinase PhnN (410 aa).

The interval 1-220 (MRYAVYLAPP…VWLLMAGSTS (220 aa)) is unknown. A ribose 1,5-bisphosphokinase region spans residues 221–410 (MRTETGQLIY…SHCHQPITAL (190 aa)). Residue 233–240 (GPSGAGKD) coordinates ATP.

It in the C-terminal section; belongs to the ribose 1,5-bisphosphokinase family.

The enzyme catalyses alpha-D-ribose 1,5-bisphosphate + ATP = 5-phospho-alpha-D-ribose 1-diphosphate + ADP. It functions in the pathway metabolic intermediate biosynthesis; 5-phospho-alpha-D-ribose 1-diphosphate biosynthesis; 5-phospho-alpha-D-ribose 1-diphosphate from D-ribose 5-phosphate (route II): step 3/3. Functionally, catalyzes the phosphorylation of ribose 1,5-bisphosphate to 5-phospho-D-ribosyl alpha-1-diphosphate (PRPP). In Laribacter hongkongensis (strain HLHK9), this protein is Ribose 1,5-bisphosphate phosphokinase PhnN (phnN).